Here is a 121-residue protein sequence, read N- to C-terminus: U15-barytoxin-Tl1b (121 aa).

A signal peptide spans 1–16 (MKLFMVLVASFAFAVA). 4 cysteine pairs are disulfide-bonded: Cys54/Cys72, Cys65/Cys78, Cys69/Cys119, and Cys71/Cys90.

This sequence belongs to the neurotoxin 03 (Tx2) family. 03 subfamily. Expressed by the venom gland.

It localises to the secreted. In terms of biological role, ion channel inhibitor. This Trittame loki (Brush-footed trapdoor spider) protein is U15-barytoxin-Tl1b.